We begin with the raw amino-acid sequence, 450 residues long: Bifunctional protein GlmU (450 aa).

The tract at residues 1-229 (MRRHAIILAA…VEEIMGVNDR (229 aa)) is pyrophosphorylase. UDP-N-acetyl-alpha-D-glucosamine is bound by residues 8-11 (LAAG), K22, Q72, and 77-78 (GT). D102 lines the Mg(2+) pocket. UDP-N-acetyl-alpha-D-glucosamine-binding residues include G139, E154, and N227. N227 lines the Mg(2+) pocket. The segment at 230–250 (VMLSQAEKAMQRRTNHYHMLN) is linker. The N-acetyltransferase stretch occupies residues 251 to 450 (GVTIIDPDST…RQTTKEGYRK (200 aa)). Positions 332 and 350 each coordinate UDP-N-acetyl-alpha-D-glucosamine. H362 acts as the Proton acceptor in catalysis. UDP-N-acetyl-alpha-D-glucosamine-binding residues include Y365 and N376. Acetyl-CoA is bound by residues 385-386 (NY), A422, and R439.

In the N-terminal section; belongs to the N-acetylglucosamine-1-phosphate uridyltransferase family. The protein in the C-terminal section; belongs to the transferase hexapeptide repeat family. As to quaternary structure, homotrimer. It depends on Mg(2+) as a cofactor.

The protein resides in the cytoplasm. It carries out the reaction alpha-D-glucosamine 1-phosphate + acetyl-CoA = N-acetyl-alpha-D-glucosamine 1-phosphate + CoA + H(+). It catalyses the reaction N-acetyl-alpha-D-glucosamine 1-phosphate + UTP + H(+) = UDP-N-acetyl-alpha-D-glucosamine + diphosphate. Its pathway is nucleotide-sugar biosynthesis; UDP-N-acetyl-alpha-D-glucosamine biosynthesis; N-acetyl-alpha-D-glucosamine 1-phosphate from alpha-D-glucosamine 6-phosphate (route II): step 2/2. It participates in nucleotide-sugar biosynthesis; UDP-N-acetyl-alpha-D-glucosamine biosynthesis; UDP-N-acetyl-alpha-D-glucosamine from N-acetyl-alpha-D-glucosamine 1-phosphate: step 1/1. It functions in the pathway bacterial outer membrane biogenesis; LPS lipid A biosynthesis. Its function is as follows. Catalyzes the last two sequential reactions in the de novo biosynthetic pathway for UDP-N-acetylglucosamine (UDP-GlcNAc). The C-terminal domain catalyzes the transfer of acetyl group from acetyl coenzyme A to glucosamine-1-phosphate (GlcN-1-P) to produce N-acetylglucosamine-1-phosphate (GlcNAc-1-P), which is converted into UDP-GlcNAc by the transfer of uridine 5-monophosphate (from uridine 5-triphosphate), a reaction catalyzed by the N-terminal domain. This is Bifunctional protein GlmU from Staphylococcus aureus (strain NCTC 8325 / PS 47).